A 267-amino-acid polypeptide reads, in one-letter code: tRNA pseudouridine synthase A (267 aa).

Aspartate 54 acts as the Nucleophile in catalysis. Position 114 (tyrosine 114) interacts with substrate.

This sequence belongs to the tRNA pseudouridine synthase TruA family. As to quaternary structure, homodimer.

It catalyses the reaction uridine(38/39/40) in tRNA = pseudouridine(38/39/40) in tRNA. Formation of pseudouridine at positions 38, 39 and 40 in the anticodon stem and loop of transfer RNAs. The sequence is that of tRNA pseudouridine synthase A from Tropheryma whipplei (strain Twist) (Whipple's bacillus).